A 999-amino-acid polypeptide reads, in one-letter code: Sarcoplasmic/endoplasmic reticulum calcium ATPase 3 (999 aa).

Position 1 is an N-acetylmethionine (M1). Residues 1 to 48 (MEEAHLLPAADVLRRFSVTAEGGLSPAQVTRARERYGPNELPTEEGKS) are Cytoplasmic-facing. S17 is modified (phosphoserine). The residue at position 19 (T19) is a Phosphothreonine. S25 carries the phosphoserine modification. A helical transmembrane segment spans residues 49–69 (LWELVLEQFEDLLVRILLLAA). At 70-89 (LVSFVLACFEEGEETTTAFV) the chain is on the extracellular side. A helical membrane pass occupies residues 90–110 (EPLVIVLILVANAVVGVWQER). Over 111–253 (NAENAIEALK…PERTPLQQKL (143 aa)) the chain is Cytoplasmic. The helical transmembrane segment at 254–273 (DEFGRQLSRAISVICMAVWV) threads the bilayer. Residues 274-295 (INIGHFADPAHGGSWLRGAVYY) are Extracellular-facing. A helical transmembrane segment spans residues 296-313 (FKIAVALAVAAIPEGLPA). Residues V304, A305, I307, and E309 each contribute to the Ca(2+) site. Over 314–757 (VITTCLALGT…EEGRAIYSNM (444 aa)) the chain is Cytoplasmic. D351 serves as the catalytic 4-aspartylphosphate intermediate. D351 and T353 together coordinate Mg(2+). ATP is bound at residue T353. Positions 370–400 (AEAEAGTCRLHEFTISGTTYAPEGEVRQGEQ) are interaction with phospholamban 1. T415 is modified (phosphothreonine). Residues E442, R489, K515, R560, T625, G626, and D627 each contribute to the ATP site. S662 is modified (phosphoserine). ATP-binding residues include R678 and K684. D703 contributes to the Mg(2+) binding site. N706 contacts ATP. The helical transmembrane segment at 758-777 (KQFIRYLISSNVGEVVCIFL) threads the bilayer. 2 residues coordinate Ca(2+): N768 and E771. Residues 778-787 (TAILGLPEAL) lie on the Extracellular side of the membrane. Residues 788 to 808 (IPVQLLWVNLVTDGLPATALG) traverse the membrane as a helical segment. The interval 788–808 (IPVQLLWVNLVTDGLPATALG) is interaction with phospholamban 2. Ca(2+)-binding residues include N796, T799, and D800. At 809–828 (FNPPDLDIMEKRPRNPREAL) the chain is on the cytoplasmic side. Residues 829–851 (ISGWLFFRYLAIGVYVGLATVAA) traverse the membrane as a helical segment. Residues 852–897 (ATWWFLYDAEGPQVTFYQLRNFLKCSEDNPLFTGTDCEVFESRFPT) are Extracellular-facing. C876 and C888 are disulfide-bonded. A helical membrane pass occupies residues 898-917 (TMALSVLVTTEMCNALNSVS). Position 908 (E908) interacts with Ca(2+). Topologically, residues 918-930 (ENQSLLRMPPWLN) are cytoplasmic. A helical transmembrane segment spans residues 931-949 (PWLLAAVAMSMALHFLILL). At 950-964 (VPPLPLIFQVTPLSG) the chain is on the extracellular side. A helical membrane pass occupies residues 965–985 (RQWVVVLQISLPVILLDEALK). Topologically, residues 986 to 999 (YLSRKHVDEEKGRQ) are cytoplasmic.

This sequence belongs to the cation transport ATPase (P-type) (TC 3.A.3) family. Type IIA subfamily. In terms of assembly, interacts with sarcolipin (SLN). Interacts with phospholamban (PLN). Interacts with myoregulin (MRLN). Interacts with DWORF. Interacts with VMP1. Interacts with TUNAR; the interaction occurs at low levels in low glucose conditions and is increased by high glucose levels. It depends on Mg(2+) as a cofactor. As to expression, expressed in endothelial tissues.

The protein resides in the endoplasmic reticulum membrane. It is found in the sarcoplasmic reticulum membrane. It carries out the reaction Ca(2+)(in) + ATP + H2O = Ca(2+)(out) + ADP + phosphate + H(+). Its activity is regulated as follows. Inhibited by sarcolipin (SLN), phospholamban (PLN) and myoregulin (MRLN). Enhanced by DWORF; DWORF increases activity by displacing sarcolipin (SLN), phospholamban (PLN) and myoregulin (MRLN). In terms of biological role, this magnesium-dependent enzyme catalyzes the hydrolysis of ATP coupled with the transport of calcium. Transports calcium ions from the cytosol into the sarcoplasmic/endoplasmic reticulum lumen. Contributes to calcium sequestration involved in muscular excitation/contraction. The chain is Sarcoplasmic/endoplasmic reticulum calcium ATPase 3 (ATP2A3) from Sus scrofa (Pig).